A 109-amino-acid polypeptide reads, in one-letter code: Ferredoxin CarAc (109 aa).

The 2Fe-2S ferredoxin-type domain occupies 3-108 (AKVRVIFRAA…GLTLELPKAQ (106 aa)). [2Fe-2S] cluster is bound by residues Cys-43, Cys-49, Cys-52, and Cys-89.

This sequence belongs to the adrenodoxin/putidaredoxin family. Monomer. Carbazole 1,9a-dioxygenase complex consists of a terminal oxygenase component CarAa, a ferredoxin reductase component fdr and a ferredoxin component CarAc. [2Fe-2S] cluster serves as cofactor.

Functionally, part of the multicomponent carbazole 1,9a-dioxygenase (CARDO), that converts carbazole (CAR) into 2-aminobiphenyl-2,3-diol. Acts as a mediator in the electron transfer from fdr to CarAa. The protein is Ferredoxin CarAc (carAc) of Sphingomonas sp.